We begin with the raw amino-acid sequence, 632 residues long: Golgin subfamily A member 8J (632 aa).

Residues 1-76 (MAEETQHNKL…TSSATLKDLE (76 aa)) form a disordered region. Coiled-coil stretches lie at residues 86–154 (LDSR…HMKR) and 220–421 (LKVQ…SLMA). Composition is skewed to basic and acidic residues over residues 352–362 (KQEERIQEQHK) and 427–440 (HGGE…EEAP). Disordered stretches follow at residues 352–377 (KQEE…FKEP), 423–452 (PGEG…DPES), and 496–524 (LSEP…DEGE). A compositionally biased stretch (gly residues) spans 508–520 (LGGGHHQAGAQGG).

This sequence belongs to the GOLGA8 family.

This Homo sapiens (Human) protein is Golgin subfamily A member 8J (GOLGA8J).